The sequence spans 247 residues: Ras-like protein family member 11B (247 aa).

The small GTPase-like stretch occupies residues 28 to 245; it reads AGRRLVKIAV…ALSAKVRTVT (218 aa). GTP-binding positions include 39-46, 86-93, and 151-154; these read GASGVGKT, DTPGIQVH, and NKAD. The tract at residues 202–228 is disordered; that stretch reads PKQQPSSTPEKRRTSLIPRPKSPNMQD.

The protein belongs to the small GTPase superfamily. Ras family.

The catalysed reaction is GTP + H2O = GDP + phosphate + H(+). The sequence is that of Ras-like protein family member 11B from Mus musculus (Mouse).